A 130-amino-acid polypeptide reads, in one-letter code: Small ribosomal subunit protein bS6 (130 aa).

The segment at 100 to 130 (SPMVKAKDERRERHDFASEANDDSEAGDSEE) is disordered. Over residues 104–116 (KAKDERRERHDFA) the composition is skewed to basic and acidic residues. Residues 119-130 (ANDDSEAGDSEE) are compositionally biased toward acidic residues.

Belongs to the bacterial ribosomal protein bS6 family.

Its function is as follows. Binds together with bS18 to 16S ribosomal RNA. This chain is Small ribosomal subunit protein bS6, found in Yersinia pestis (strain Pestoides F).